A 415-amino-acid polypeptide reads, in one-letter code: Gamma-glutamyl phosphate reductase (415 aa).

This sequence belongs to the gamma-glutamyl phosphate reductase family.

It localises to the cytoplasm. The enzyme catalyses L-glutamate 5-semialdehyde + phosphate + NADP(+) = L-glutamyl 5-phosphate + NADPH + H(+). The protein operates within amino-acid biosynthesis; L-proline biosynthesis; L-glutamate 5-semialdehyde from L-glutamate: step 2/2. In terms of biological role, catalyzes the NADPH-dependent reduction of L-glutamate 5-phosphate into L-glutamate 5-semialdehyde and phosphate. The product spontaneously undergoes cyclization to form 1-pyrroline-5-carboxylate. In Carboxydothermus hydrogenoformans (strain ATCC BAA-161 / DSM 6008 / Z-2901), this protein is Gamma-glutamyl phosphate reductase.